The primary structure comprises 172 residues: MASDEGKLFVGGLSFDTNEQALEQVFSKYGQISEVVVVKDRETQRSRGFGFVTFENIDDAKDAMMAMNGKSVDGRQIRVDQAGKSSDNRSRGYRGGSAGGRGFFRGGRSRGRGFSRGGGDRGYGGGRFESRSGGYGGSRDYYASRSQGGSYGYRSSGGSYRDSYDSYATHNE.

An RRM domain is found at Gly6 to Lys84. The disordered stretch occupies residues Lys70–Glu172. Composition is skewed to gly residues over residues Tyr93–Arg105 and Phe114–Gly137. 6 positions are modified to phosphoserine: Ser130, Ser138, Ser146, Ser156, Ser159, and Ser163. A compositionally biased stretch (low complexity) spans Ser138 to Glu172.

Interacts with EIF4G1. Associates with ribosomes. Methylated on arginine residues. Methylation of the RGG motifs is a prerequisite for recruitment into SGs. Post-translationally, phosphorylated by CK2, GSK3A and GSK3B. Phosphorylation by GSK3B increases RNA-binding activity to the TXN 3'-UTR transcript upon exposure to UV radiation. In terms of tissue distribution, ubiquitous.

It localises to the nucleus. Its subcellular location is the nucleoplasm. It is found in the cytoplasm. Its function is as follows. Cold-inducible mRNA binding protein that plays a protective role in the genotoxic stress response by stabilizing transcripts of genes involved in cell survival. Promotes assembly of stress granules (SGs), when overexpressed. Seems to play an essential role in cold-induced suppression of cell proliferation. Acts as a translational repressor. Acts as a translational activator. Binds specifically to the 3'-untranslated regions (3'-UTRs) of stress-responsive transcripts RPA2 and TXN. The sequence is that of Cold-inducible RNA-binding protein (Cirbp) from Mus musculus (Mouse).